The primary structure comprises 195 residues: ATP-dependent Clp protease proteolytic subunit 2 (195 aa).

The active-site Nucleophile is Ser98. The active site involves His123.

This sequence belongs to the peptidase S14 family. As to quaternary structure, fourteen ClpP subunits assemble into 2 heptameric rings which stack back to back to give a disk-like structure with a central cavity, resembling the structure of eukaryotic proteasomes.

It is found in the cytoplasm. The catalysed reaction is Hydrolysis of proteins to small peptides in the presence of ATP and magnesium. alpha-casein is the usual test substrate. In the absence of ATP, only oligopeptides shorter than five residues are hydrolyzed (such as succinyl-Leu-Tyr-|-NHMec, and Leu-Tyr-Leu-|-Tyr-Trp, in which cleavage of the -Tyr-|-Leu- and -Tyr-|-Trp bonds also occurs).. Its function is as follows. Cleaves peptides in various proteins in a process that requires ATP hydrolysis. Has a chymotrypsin-like activity. Plays a major role in the degradation of misfolded proteins. ClpXP2 is involved in the complete degradation of the Site-2 clipped anti-sigma-W factor RsiW. This results in the release of SigW and the transcription activation of the genes under the control of the sigma-W factor. The chain is ATP-dependent Clp protease proteolytic subunit 2 from Shouchella clausii (strain KSM-K16) (Alkalihalobacillus clausii).